A 1644-amino-acid chain; its full sequence is Terminal uridylyltransferase 4 (1644 aa).

3 disordered regions span residues 31 to 63 (NQTLKARNDKSVKEIENSSPNRNSSKKNKQNDI), 96 to 168 (CKAK…SLLL), and 205 to 257 (ALQN…EMDY). Positions 36-46 (ARNDKSVKEIE) are enriched in basic and acidic residues. Phosphoserine is present on S104. The span at 112–125 (TISQAKSEKATSLQ) shows a compositional bias: polar residues. Phosphoserine is present on residues S134 and S156. Residues 206–222 (LQNSPRSQKQQTCTDNT) show a composition bias toward polar residues. Residues 238–252 (DLSKMKNDESNKENS) show a composition bias toward basic and acidic residues. The required for interaction with LIN28A and pre-let-7 RNA stretch occupies residues 253-333 (SEMDYLENAT…KEKRHKKNIL (81 aa)). Residues C306, C309, H322, and H328 each contribute to the Zn(2+) site. Residues 579 to 617 (EKNSIAEENKAKADQPKDDTKKTETDNQSNAMKEKHGKS) are disordered. The segment covering 582–603 (SIAEENKAKADQPKDDTKKTET) has biased composition (basic and acidic residues). The PAP-associated 1 domain occupies 628–678 (SLGQLWLELLKFYTLDFALEEYVICVRIQDILTRENKNWPKRRIAIEDPFS). A disordered region spans residues 794–816 (GQDSSSLSTSKSSEIEPKLDKKQ). The span at 806–816 (SEIEPKLDKKQ) shows a compositional bias: basic and acidic residues. The sufficient for monouridylation activity stretch occupies residues 901-1634 (DKFILTSGKP…CATRRCRERC (734 aa)). Residues 913–930 (IVCSICKKDGHSKNDCPE) form a CCHC-type 1 zinc finger. UTP is bound by residues 998–1001 (SSKN), 1008–1011 (SDLD), N1081, K1103, 1121–1125 (SYAYI), and H1237. 2 residues coordinate Mg(2+): D1009 and D1011. In terms of domain architecture, PAP-associated 2 spans 1184–1237 (SLGELWLGLLRFYTEEFDFKEYVISIRQKKLLTTFEKQWTSKCIAIEDPFDLNH). The CCHC-type 2 zinc finger occupies 1293–1310 (RCCRVCGKIGHYMKDCPK). The interval 1321 to 1348 (KDSEEEKEGNEEEKDSRDVLDPRDLHDT) is disordered. Positions 1334 to 1348 (KDSRDVLDPRDLHDT) are enriched in basic and acidic residues. Residues 1357–1374 (LRCFICGDAGHVRRECPE) form a CCHC-type 3 zinc finger. The segment covering 1401–1426 (AGSAQQQGDQSIRTRQSSECSESPSY) has biased composition (low complexity). Residues 1401–1482 (AGSAQQQGDQ…LYNFPQSPPA (82 aa)) form a disordered region. The span at 1441 to 1452 (AAITQPSSQPGS) shows a compositional bias: polar residues. Low complexity predominate over residues 1453 to 1470 (QPKLGPPQQGAQPPHQVQ). R1624 carries the omega-N-methylarginine modification.

Belongs to the DNA polymerase type-B-like family. As to quaternary structure, interacts with LIN28A in the presence of pre-let-7 RNA. Interacts with T2BP. Interacts with MOV10; the interaction is RNA-dependent. Mg(2+) serves as cofactor. The cofactor is Mn(2+).

The protein resides in the nucleus. Its subcellular location is the cytoplasm. It localises to the cytoplasmic ribonucleoprotein granule. The catalysed reaction is RNA(n) + UTP = RNA(n)-3'-uridine ribonucleotide + diphosphate. Uridylyltransferase that mediates the terminal uridylation of mRNAs with short (less than 25 nucleotides) poly(A) tails, hence facilitating global mRNA decay. Essential for both oocyte maturation and fertility. Through 3' terminal uridylation of mRNA, sculpts, with TUT7, the maternal transcriptome by eliminating transcripts during oocyte growth. Involved in microRNA (miRNA)-induced gene silencing through uridylation of deadenylated miRNA targets. Also functions as an integral regulator of microRNA biogenesis using 3 different uridylation mechanisms. Acts as a suppressor of miRNA biogenesis by mediating the terminal uridylation of some miRNA precursors, including that of let-7 (pre-let-7), miR107, miR-143 and miR-200c. Uridylated miRNAs are not processed by Dicer and undergo degradation. Degradation of pre-let-7 contributes to the maintenance of embryonic stem (ES) cell pluripotency. Also catalyzes the 3' uridylation of miR-26A, a miRNA that targets IL6 transcript. This abrogates the silencing of IL6 transcript, hence promoting cytokine expression. In the absence of LIN28A, TUT7 and TUT4 monouridylate group II pre-miRNAs, which includes most of pre-let7 members, that shapes an optimal 3' end overhang for efficient processing. Adds oligo-U tails to truncated pre-miRNAS with a 5' overhang which may promote rapid degradation of non-functional pre-miRNA species. May also suppress Toll-like receptor-induced NF-kappa-B activation via binding to T2BP. Does not play a role in replication-dependent histone mRNA degradation. Due to functional redundancy between TUT4 and TUT7, the identification of the specific role of each of these proteins is difficult. TUT4 and TUT7 restrict retrotransposition of long interspersed element-1 (LINE-1) in cooperation with MOV10 counteracting the RNA chaperonne activity of L1RE1. TUT7 uridylates LINE-1 mRNAs in the cytoplasm which inhibits initiation of reverse transcription once in the nucleus, whereas uridylation by TUT4 destabilizes mRNAs in cytoplasmic ribonucleoprotein granules. The chain is Terminal uridylyltransferase 4 from Homo sapiens (Human).